We begin with the raw amino-acid sequence, 353 residues long: O-antigen biosynthesis glycosyltransferase WclY (353 aa).

The helical transmembrane segment at 116-136 (SLIWGLLWCSIWLFFDKLVIL) threads the bilayer. 2 residues coordinate UDP: Asn-190 and Glu-271. Residues 263–271 (EGFGLTVLE) carry the E(x7)E glycosyltransferase motif motif.

This sequence belongs to the glycosyltransferase group 1 family. Glycosyltransferase 4 subfamily.

The protein resides in the membrane. The protein operates within bacterial outer membrane biogenesis; LPS O-antigen biosynthesis. Functionally, involved in the assembly of the O-repeating unit during O-antigen biosynthesis. N-acetylglucosamine transferase accountable for the alpha-D-GlcNAc-1,4-beta-D-Gal linkage within the O-antigen. This chain is O-antigen biosynthesis glycosyltransferase WclY, found in Escherichia coli.